Reading from the N-terminus, the 264-residue chain is Small ribosomal subunit protein uS2 (264 aa).

The protein belongs to the universal ribosomal protein uS2 family.

The chain is Small ribosomal subunit protein uS2 from Helicobacter pylori (strain Shi470).